A 227-amino-acid chain; its full sequence is Thymidylate kinase (227 aa).

An ATP-binding site is contributed by 16–23 (GIDGAGKT).

This sequence belongs to the thymidylate kinase family.

The catalysed reaction is dTMP + ATP = dTDP + ADP. In terms of biological role, phosphorylation of dTMP to form dTDP in both de novo and salvage pathways of dTTP synthesis. This is Thymidylate kinase from Xanthomonas oryzae pv. oryzae (strain MAFF 311018).